Consider the following 277-residue polypeptide: N-acetylmuramic acid 6-phosphate etherase (277 aa).

One can recognise an SIS domain in the interval 53–216; it reads IIPRVKKGGR…STTIMIELGR (164 aa). The active-site Proton donor is Glu-81. Residue Glu-112 is part of the active site.

It belongs to the GCKR-like family. MurNAc-6-P etherase subfamily. In terms of assembly, homodimer.

The enzyme catalyses N-acetyl-D-muramate 6-phosphate + H2O = N-acetyl-D-glucosamine 6-phosphate + (R)-lactate. It participates in amino-sugar metabolism; N-acetylmuramate degradation. Specifically catalyzes the cleavage of the D-lactyl ether substituent of MurNAc 6-phosphate, producing GlcNAc 6-phosphate and D-lactate. The protein is N-acetylmuramic acid 6-phosphate etherase of Bacteroides thetaiotaomicron (strain ATCC 29148 / DSM 2079 / JCM 5827 / CCUG 10774 / NCTC 10582 / VPI-5482 / E50).